A 90-amino-acid polypeptide reads, in one-letter code: Cell division topological specificity factor 2 (90 aa).

The protein belongs to the MinE family.

Its function is as follows. Prevents the cell division inhibition by proteins MinC and MinD at internal division sites while permitting inhibition at polar sites. This ensures cell division at the proper site by restricting the formation of a division septum at the midpoint of the long axis of the cell. This chain is Cell division topological specificity factor 2, found in Syntrophomonas wolfei subsp. wolfei (strain DSM 2245B / Goettingen).